The following is a 147-amino-acid chain: Orcokinin peptides (147 aa).

The first 27 residues, 1–27, serve as a signal peptide directing secretion; that stretch reads MPRHSVFALSILALSITATVWIPTVQA. 2 propeptides span residues 28 to 89 and 146 to 147; these read ETNL…ERFG and FG.

Belongs to the orcokinin family.

The protein resides in the secreted. Functionally, myotropic peptides. The chain is Orcokinin peptides from Apis mellifera (Honeybee).